A 273-amino-acid chain; its full sequence is MQHPTPDALHARLAARRFILAGPCALEDFDVAMETAHAVREAAEAAGLFAVFKSSWDKANRTSITSFRGPGLVRGMEWLARIREESGLPVVTDIHLPEQAAPVAEVADIIQIPAFLCRQTDLLVAAAATGRVVNVKKGQFVAPWDMRPAVEKLRAAGNERILLTERGASFGYNNLVVDYRSIPTMQGFGVPVVFDATHSVQLPGGLGGSSGGERRHVPVLARAAVAAGVDGVFLECHPDPDKALCDGPNSWPLDRLPALLKELSALWSLEHVC.

The protein belongs to the KdsA family.

Its subcellular location is the cytoplasm. It carries out the reaction D-arabinose 5-phosphate + phosphoenolpyruvate + H2O = 3-deoxy-alpha-D-manno-2-octulosonate-8-phosphate + phosphate. The protein operates within carbohydrate biosynthesis; 3-deoxy-D-manno-octulosonate biosynthesis; 3-deoxy-D-manno-octulosonate from D-ribulose 5-phosphate: step 2/3. Its pathway is bacterial outer membrane biogenesis; lipopolysaccharide biosynthesis. The sequence is that of 2-dehydro-3-deoxyphosphooctonate aldolase from Nitratidesulfovibrio vulgaris (strain ATCC 29579 / DSM 644 / CCUG 34227 / NCIMB 8303 / VKM B-1760 / Hildenborough) (Desulfovibrio vulgaris).